A 153-amino-acid polypeptide reads, in one-letter code: Interleukin-2 (153 aa).

The N-terminal stretch at 1 to 20 (MYKVQLLSCIALTLALLTSS) is a signal peptide. O-linked (GalNAc...) threonine glycosylation is present at Thr-23. Cys-78 and Cys-125 are disulfide-bonded. Asn-111 is a glycosylation site (N-linked (GlcNAc...) asparagine).

This sequence belongs to the IL-2 family.

The protein resides in the secreted. Its function is as follows. Cytokine produced by activated CD4-positive helper T-cells and to a lesser extend activated CD8-positive T-cells and natural killer (NK) cells that plays pivotal roles in the immune response and tolerance. Binds to a receptor complex composed of either the high-affinity trimeric IL-2R (IL2RA/CD25, IL2RB/CD122 and IL2RG/CD132) or the low-affinity dimeric IL-2R (IL2RB and IL2RG). Interaction with the receptor leads to oligomerization and conformation changes in the IL-2R subunits resulting in downstream signaling starting with phosphorylation of JAK1 and JAK3. In turn, JAK1 and JAK3 phosphorylate the receptor to form a docking site leading to the phosphorylation of several substrates including STAT5. This process leads to activation of several pathways including STAT, phosphoinositide-3-kinase/PI3K and mitogen-activated protein kinase/MAPK pathways. Functions as a T-cell growth factor and can increase NK-cell cytolytic activity as well. Promotes strong proliferation of activated B-cells and subsequently immunoglobulin production. Plays a pivotal role in regulating the adaptive immune system by controlling the survival and proliferation of regulatory T-cells, which are required for the maintenance of immune tolerance. Moreover, participates in the differentiation and homeostasis of effector T-cell subsets, including Th1, Th2, Th17 as well as memory CD8-positive T-cells. In Oryctolagus cuniculus (Rabbit), this protein is Interleukin-2 (IL2).